The primary structure comprises 256 residues: Eukaryotic translation initiation factor 3 subunit J (256 aa).

Composition is skewed to acidic residues over residues 1-14 (MAEN…DFEP) and 35-54 (EGED…EEAE). Disordered regions lie at residues 1 to 109 (MAEN…SPEE) and 214 to 237 (QSKA…MKND). Residues 55–101 (AATKQEAQKTVEPKVSEKKKLLEKIREKEKLHKKRQEEVNQQEKEGT) are compositionally biased toward basic and acidic residues. A coiled-coil region spans residues 70-99 (SEKKKLLEKIREKEKLHKKRQEEVNQQEKE).

It belongs to the eIF-3 subunit J family. As to quaternary structure, component of the eukaryotic translation initiation factor 3 (eIF-3) complex, which is composed of 13 subunits: eif3a, eif3b, eif3c, eif3d, eif3e, eif3f, eif3g, eif3h, eif3i, eif3j, eif3k, eif3l and eif3m.

It is found in the cytoplasm. Component of the eukaryotic translation initiation factor 3 (eIF-3) complex, which is involved in protein synthesis of a specialized repertoire of mRNAs and, together with other initiation factors, stimulates binding of mRNA and methionyl-tRNAi to the 40S ribosome. The eIF-3 complex specifically targets and initiates translation of a subset of mRNAs involved in cell proliferation. This is Eukaryotic translation initiation factor 3 subunit J (eif3j) from Xenopus tropicalis (Western clawed frog).